We begin with the raw amino-acid sequence, 309 residues long: Taste receptor type 2 member 8 (309 aa).

Residues 1–7 (MFSPADN) are Extracellular-facing. The helical transmembrane segment at 8-28 (IFIILITGEFILGILGNGYIA) threads the bilayer. Over 29-50 (LVNWIDWIKKKKISTVDYILTN) the chain is Cytoplasmic. Residues 51-71 (LVIARICLISVMVVNGIVIVL) form a helical membrane-spanning segment. Over 72 to 82 (NPDVYTKNKQQ) the chain is Extracellular. Residues 83–103 (IVIFTFWTFANYLNMWITTCL) form a helical membrane-spanning segment. The Cytoplasmic segment spans residues 104 to 131 (NVFYFLKIASSSHPLFLWLKWKIDMVVH). The helical transmembrane segment at 132–152 (WILLGCFAISLLVSLIAAIVL) threads the bilayer. The Extracellular portion of the chain corresponds to 153–184 (SCDYRFHAIAKHKRNITEMFHVSKXPYFEPLT). An N-linked (GlcNAc...) asparagine glycan is attached at asparagine 167. A helical transmembrane segment spans residues 185 to 205 (LFNLFAIVPFIVSLISFFLLV). Residues 206–239 (RSLWRHTKQIKLYATGSRDPSTEVHVRAIKTMTS) lie on the Cytoplasmic side of the membrane. Residues 240 to 260 (FIFFFFLYFISSILMTFSYLM) traverse the membrane as a helical segment. At 261–266 (TKYKLA) the chain is on the extracellular side. Residues 267–287 (VEFGEIAAILYPLGHSLILIV) form a helical membrane-spanning segment. Over 288 to 309 (LNNKLRQIFVRMLTCRKIACVI) the chain is Cytoplasmic.

Belongs to the G-protein coupled receptor T2R family.

Its subcellular location is the membrane. In terms of biological role, receptor that may play a role in the perception of bitterness and is gustducin-linked. May play a role in sensing the chemical composition of the gastrointestinal content. The activity of this receptor may stimulate alpha gustducin, mediate PLC-beta-2 activation and lead to the gating of TRPM5. This Pan paniscus (Pygmy chimpanzee) protein is Taste receptor type 2 member 8 (TAS2R8).